We begin with the raw amino-acid sequence, 275 residues long: 4-diphosphocytidyl-2-C-methyl-D-erythritol kinase (275 aa).

The active site involves Lys15. Residue 97–107 (PMGSGLGGGSS) participates in ATP binding. Asp137 is an active-site residue.

The protein belongs to the GHMP kinase family. IspE subfamily.

It carries out the reaction 4-CDP-2-C-methyl-D-erythritol + ATP = 4-CDP-2-C-methyl-D-erythritol 2-phosphate + ADP + H(+). It functions in the pathway isoprenoid biosynthesis; isopentenyl diphosphate biosynthesis via DXP pathway; isopentenyl diphosphate from 1-deoxy-D-xylulose 5-phosphate: step 3/6. Functionally, catalyzes the phosphorylation of the position 2 hydroxy group of 4-diphosphocytidyl-2C-methyl-D-erythritol. The chain is 4-diphosphocytidyl-2-C-methyl-D-erythritol kinase from Pseudothermotoga lettingae (strain ATCC BAA-301 / DSM 14385 / NBRC 107922 / TMO) (Thermotoga lettingae).